The primary structure comprises 349 residues: Hydroxymethylglutaryl-CoA synthase (349 aa).

(3S)-3-hydroxy-3-methylglutaryl-CoA is bound by residues Asp30 and Ala31. Catalysis depends on Glu82, which acts as the Proton donor/acceptor. Residues Cys114 and Thr155 each contribute to the (3S)-3-hydroxy-3-methylglutaryl-CoA site. The active-site Acyl-thioester intermediate is Cys114. Arg203 provides a ligand contact to CoA. Residues Thr205 and His238 each contribute to the (3S)-3-hydroxy-3-methylglutaryl-CoA site. The Proton donor/acceptor role is filled by His238. Lys243 provides a ligand contact to CoA. The (3S)-3-hydroxy-3-methylglutaryl-CoA site is built by Asn270 and Ser300.

This sequence belongs to the thiolase-like superfamily. Archaeal HMG-CoA synthase family. As to quaternary structure, interacts with acetoacetyl-CoA thiolase that catalyzes the precedent step in the pathway and with a DUF35 protein. The acetoacetyl-CoA thiolase/HMG-CoA synthase complex channels the intermediate via a fused CoA-binding site, which allows for efficient coupling of the endergonic thiolase reaction with the exergonic HMGCS reaction.

It catalyses the reaction acetoacetyl-CoA + acetyl-CoA + H2O = (3S)-3-hydroxy-3-methylglutaryl-CoA + CoA + H(+). The protein operates within metabolic intermediate biosynthesis; (R)-mevalonate biosynthesis; (R)-mevalonate from acetyl-CoA: step 2/3. Its function is as follows. Catalyzes the condensation of acetyl-CoA with acetoacetyl-CoA to form 3-hydroxy-3-methylglutaryl-CoA (HMG-CoA). Functions in the mevalonate (MVA) pathway leading to isopentenyl diphosphate (IPP), a key precursor for the biosynthesis of isoprenoid compounds that are building blocks of archaeal membrane lipids. In Methanococcus maripaludis (strain DSM 14266 / JCM 13030 / NBRC 101832 / S2 / LL), this protein is Hydroxymethylglutaryl-CoA synthase.